Reading from the N-terminus, the 110-residue chain is Phosphoribosyl-ATP pyrophosphatase (110 aa).

Belongs to the PRA-PH family.

Its subcellular location is the cytoplasm. The enzyme catalyses 1-(5-phospho-beta-D-ribosyl)-ATP + H2O = 1-(5-phospho-beta-D-ribosyl)-5'-AMP + diphosphate + H(+). It participates in amino-acid biosynthesis; L-histidine biosynthesis; L-histidine from 5-phospho-alpha-D-ribose 1-diphosphate: step 2/9. The polypeptide is Phosphoribosyl-ATP pyrophosphatase (Pseudomonas fluorescens (strain Pf0-1)).